Reading from the N-terminus, the 281-residue chain is Phosphatidylglycerol--prolipoprotein diacylglyceryl transferase (281 aa).

A run of 7 helical transmembrane segments spans residues I11–F31, L57–Y77, V89–V109, I121–I141, P194–F214, G222–F242, and I255–Y275. A 1,2-diacyl-sn-glycero-3-phospho-(1'-sn-glycerol) is bound at residue R140.

It belongs to the Lgt family.

The protein resides in the cell inner membrane. It catalyses the reaction L-cysteinyl-[prolipoprotein] + a 1,2-diacyl-sn-glycero-3-phospho-(1'-sn-glycerol) = an S-1,2-diacyl-sn-glyceryl-L-cysteinyl-[prolipoprotein] + sn-glycerol 1-phosphate + H(+). The protein operates within protein modification; lipoprotein biosynthesis (diacylglyceryl transfer). Catalyzes the transfer of the diacylglyceryl group from phosphatidylglycerol to the sulfhydryl group of the N-terminal cysteine of a prolipoprotein, the first step in the formation of mature lipoproteins. This Buchnera aphidicola subsp. Acyrthosiphon pisum (strain 5A) protein is Phosphatidylglycerol--prolipoprotein diacylglyceryl transferase.